Here is a 171-residue protein sequence, read N- to C-terminus: Photosystem I assembly protein Ycf3 (171 aa).

3 TPR repeats span residues 35 to 68 (AFTY…EIDP), 72 to 105 (SYIL…NPSL), and 120 to 153 (GEQA…APNN).

The protein belongs to the Ycf3 family.

It localises to the plastid. The protein resides in the chloroplast thylakoid membrane. Its function is as follows. Essential for the assembly of the photosystem I (PSI) complex. May act as a chaperone-like factor to guide the assembly of the PSI subunits. This chain is Photosystem I assembly protein Ycf3, found in Psilotum nudum (Whisk fern).